The sequence spans 162 residues: Class I hydrophobin 3 (162 aa).

2 cysteine pairs are disulfide-bonded: cysteine 36-cysteine 150 and cysteine 151-cysteine 159.

The protein belongs to the fungal hydrophobin family. As to quaternary structure, self-assembles to form functional amyloid fibrils called rodlets. Self-assembly into fibrillar rodlets occurs spontaneously at hydrophobic:hydrophilic interfaces and the rodlets further associate laterally to form amphipathic monolayers.

It localises to the secreted. The protein resides in the cell wall. In terms of biological role, aerial growth, conidiation, and dispersal of filamentous fungi in the environment rely upon a capability of their secreting small amphipathic proteins called hydrophobins (HPBs) with low sequence identity. Class I can self-assemble into an outermost layer of rodlet bundles on aerial cell surfaces, conferring cellular hydrophobicity that supports fungal growth, development and dispersal; whereas Class II form highly ordered films at water-air interfaces through intermolecular interactions but contribute nothing to the rodlet structure. The chain is Class I hydrophobin 3 from Coprinopsis cinerea (strain Okayama-7 / 130 / ATCC MYA-4618 / FGSC 9003) (Inky cap fungus).